Here is an 88-residue protein sequence, read N- to C-terminus: uncharacterized protein (88 aa).

Residues 34-54 (IIIAVILIFFLTIVGLFYLII) form a helical membrane-spanning segment.

The protein resides in the membrane. This is an uncharacterized protein from Ureaplasma parvum serovar 3 (strain ATCC 700970).